A 132-amino-acid polypeptide reads, in one-letter code: Cytidine deaminase (132 aa).

One can recognise a CMP/dCMP-type deaminase domain in the interval 1-128 (MDRQMLIKEA…ELLPGAFTAE (128 aa)). 42 to 44 (NIE) lines the substrate pocket. Position 53 (Cys-53) interacts with Zn(2+). Residue Glu-55 is the Proton donor of the active site. 2 residues coordinate Zn(2+): Cys-86 and Cys-89.

It belongs to the cytidine and deoxycytidylate deaminase family. The cofactor is Zn(2+).

The catalysed reaction is cytidine + H2O + H(+) = uridine + NH4(+). The enzyme catalyses 2'-deoxycytidine + H2O + H(+) = 2'-deoxyuridine + NH4(+). This enzyme scavenges exogenous and endogenous cytidine and 2'-deoxycytidine for UMP synthesis. The chain is Cytidine deaminase (cdd) from Halalkalibacterium halodurans (strain ATCC BAA-125 / DSM 18197 / FERM 7344 / JCM 9153 / C-125) (Bacillus halodurans).